The sequence spans 29 residues: Cuticle protein 36 (29 aa).

Its function is as follows. Component of the cuticle of migratory locust which contains more than 100 different structural proteins. The sequence is that of Cuticle protein 36 from Locusta migratoria (Migratory locust).